The sequence spans 355 residues: Blue-sensitive opsin (355 aa).

Residues 1–36 are Extracellular-facing; sequence MNGTEGINFYVPLSNKTGLVRSPFEYPQYYLAEPWK. N-linked (GlcNAc...) asparagine glycans are attached at residues asparagine 2 and asparagine 15. A helical membrane pass occupies residues 37-61; sequence YKVVCCYIFFLIFTGLPINILTLLV. Residues 62-73 are Cytoplasmic-facing; sequence TFKHKKLRQPLN. A helical membrane pass occupies residues 74 to 98; sequence YILVNLAVADLFMACFGFTVTFYTA. Over 99–113 the chain is Extracellular; the sequence is WNGYFIFGPIGCAIE. An intrachain disulfide couples cysteine 110 to cysteine 187. The helical transmembrane segment at 114–133 threads the bilayer; the sequence is GFFATLGGQVALWSLVVLAI. The Cytoplasmic segment spans residues 134–152; that stretch reads ERYIVVCKPMGNFRFSATH. Residues 153-176 traverse the membrane as a helical segment; it reads ALMGISFTWFMSFSCAAPPLLGWS. Topologically, residues 177–202 are extracellular; it reads RYIPEGMQCSCGPDYYTLNPDYHNES. The N-linked (GlcNAc...) asparagine glycan is linked to asparagine 200. A helical transmembrane segment spans residues 203–230; the sequence is YVLYMFGVHFVIPVVVIFFSYGRLICKV. Residues 231–252 are Cytoplasmic-facing; that stretch reads REAAAQQQESASTQKAEREVTR. Residues 253–276 traverse the membrane as a helical segment; it reads MVILMVLGFLLAWTPYAMVAFWIF. At 277–284 the chain is on the extracellular side; it reads TNKGVDFS. The chain crosses the membrane as a helical span at residues 285–309; sequence ATLMSVPAFFSKSSSLYNPIIYVLM. Lysine 296 is modified (N6-(retinylidene)lysine). The Cytoplasmic portion of the chain corresponds to 310–355; that stretch reads NKQFRNCMITTICCGKNPFGDEDVSSSVSQSKTEVSSVSSSQVSPA. S-palmitoyl cysteine attachment occurs at residues cysteine 322 and cysteine 323. Residues 332-355 are disordered; that stretch reads DVSSSVSQSKTEVSSVSSSQVSPA. Residues 334–355 are compositionally biased toward low complexity; that stretch reads SSSVSQSKTEVSSVSSSQVSPA.

It belongs to the G-protein coupled receptor 1 family. Opsin subfamily. Post-translationally, phosphorylated on some or all of the serine and threonine residues present in the C-terminal region.

It localises to the membrane. Visual pigments are the light-absorbing molecules that mediate vision. They consist of an apoprotein, opsin, covalently linked to cis-retinal. This opsin uses a vitamin A2 chromophore. This is Blue-sensitive opsin from Anolis carolinensis (Green anole).